Consider the following 209-residue polypeptide: Orotate phosphoribosyltransferase (209 aa).

Residues R96, K100, H102, and 122 to 130 (EDLISTGGS) contribute to the 5-phospho-alpha-D-ribose 1-diphosphate site. An orotate-binding site is contributed by S126.

This sequence belongs to the purine/pyrimidine phosphoribosyltransferase family. PyrE subfamily. As to quaternary structure, homodimer. The cofactor is Mg(2+).

The enzyme catalyses orotidine 5'-phosphate + diphosphate = orotate + 5-phospho-alpha-D-ribose 1-diphosphate. It participates in pyrimidine metabolism; UMP biosynthesis via de novo pathway; UMP from orotate: step 1/2. Catalyzes the transfer of a ribosyl phosphate group from 5-phosphoribose 1-diphosphate to orotate, leading to the formation of orotidine monophosphate (OMP). This Listeria monocytogenes serovar 1/2a (strain ATCC BAA-679 / EGD-e) protein is Orotate phosphoribosyltransferase.